Reading from the N-terminus, the 55-residue chain is Large ribosomal subunit protein bL33 (55 aa).

This sequence belongs to the bacterial ribosomal protein bL33 family.

The sequence is that of Large ribosomal subunit protein bL33 from Cereibacter sphaeroides (strain ATCC 17029 / ATH 2.4.9) (Rhodobacter sphaeroides).